Reading from the N-terminus, the 201-residue chain is Urease accessory protein UreG (201 aa).

11-18 (GPVGSGKT) serves as a coordination point for GTP.

The protein belongs to the SIMIBI class G3E GTPase family. UreG subfamily. Homodimer. UreD, UreF and UreG form a complex that acts as a GTP-hydrolysis-dependent molecular chaperone, activating the urease apoprotein by helping to assemble the nickel containing metallocenter of UreC. The UreE protein probably delivers the nickel.

It is found in the cytoplasm. Its function is as follows. Facilitates the functional incorporation of the urease nickel metallocenter. This process requires GTP hydrolysis, probably effectuated by UreG. The sequence is that of Urease accessory protein UreG from Synechococcus sp. (strain CC9902).